The sequence spans 458 residues: 5-hydroxytryptamine receptor 2C (458 aa).

The N-terminal stretch at 1-32 (MVNLRNAVHSFLVHLIGLLVWQCDISVSPVAA) is a signal peptide. The Extracellular segment spans residues 33–55 (IVTDIFNTSDGGRFKFPDGVQNW). The helical transmembrane segment at 56 to 80 (PALSIVVIIIMTIGGNILVIMAVSM) threads the bilayer. Residues 81 to 86 (EKKLHN) lie on the Cytoplasmic side of the membrane. A helical membrane pass occupies residues 87–111 (ATNYFLMSLAIADMLVGLLVMPLSL). The Extracellular portion of the chain corresponds to 112–128 (LAILYDYVWPLPRYLCP). Cysteine 127 and cysteine 207 are joined by a disulfide. The chain crosses the membrane as a helical span at residues 129-151 (VWISLDVLFSTASIMHLCAISLD). Residue threonine 139 coordinates ergotamine. The DRY motif; important for ligand-induced conformation changes motif lies at 151–153 (DRY). Topologically, residues 152 to 167 (RYVAIRNPIEHSRFNS) are cytoplasmic. A helical membrane pass occupies residues 168–189 (RTKAIMKIAIVWAISIGVSVPI). Topologically, residues 190–213 (PVIGLRDERKVFVNNTTCVLNDPN) are extracellular. Residue leucine 209 participates in ergotamine binding. Residues 214–236 (FVLIGSFVAFFIPLTIMVITYCL) traverse the membrane as a helical segment. Residues 237–311 (TIYVLRRQAL…AINNERKASK (75 aa)) lie on the Cytoplasmic side of the membrane. The disordered stretch occupies residues 274-301 (EENSANPNQDQNARRRKKKERRPRGTMQ). Over residues 287-297 (RRRKKKERRPR) the composition is skewed to basic residues. A helical transmembrane segment spans residues 312–336 (VLGIVFFVFLIMWCPFFITNILSVL). Cysteine 337 and cysteine 341 are oxidised to a cystine. Topologically, residues 337–347 (CEKSCNQKLME) are extracellular. Residues 348–370 (KLLNVFVWIGYVCSGINPLVYTL) form a helical membrane-spanning segment. Positions 364 to 368 (NPLVY) match the NPxxY motif; important for ligand-induced conformation changes and signaling motif. At 371–458 (FNKIYRRAFS…SVVSERISSV (88 aa)) the chain is on the cytoplasmic side. A PDZ-binding motif is present at residues 456–458 (SSV).

It belongs to the G-protein coupled receptor 1 family. In terms of assembly, interacts with MPDZ. Interacts with ARRB2. Interacts with MPP3; this interaction stabilizes the receptor at the plasma membrane and prevents the desensitization of the HTR2C receptor-mediated calcium response.

It localises to the cell membrane. In terms of biological role, G-protein coupled receptor for 5-hydroxytryptamine (serotonin). Also functions as a receptor for various drugs and psychoactive substances, including ergot alkaloid derivatives, 1-2,5,-dimethoxy-4-iodophenyl-2-aminopropane (DOI) and lysergic acid diethylamide (LSD). Ligand binding causes a conformation change that triggers signaling via guanine nucleotide-binding proteins (G proteins) and modulates the activity of downstream effectors. HTR2C is coupled to G(q)/G(11) G alpha proteins and activates phospholipase C-beta, releasing diacylglycerol (DAG) and inositol 1,4,5-trisphosphate (IP3) second messengers that modulate the activity of phosphatidylinositol 3-kinase and promote the release of Ca(2+) ions from intracellular stores, respectively. Beta-arrestin family members inhibit signaling via G proteins and mediate activation of alternative signaling pathways. Regulates neuronal activity via the activation of short transient receptor potential calcium channels in the brain, and thereby modulates the activation of pro-opiomelanocortin neurons and the release of CRH that then regulates the release of corticosterone. Plays a role in the regulation of appetite and eating behavior, responses to anxiogenic stimuli and stress. Plays a role in insulin sensitivity and glucose homeostasis. The polypeptide is 5-hydroxytryptamine receptor 2C (Pan troglodytes (Chimpanzee)).